A 208-amino-acid chain; its full sequence is Outer-membrane lipoprotein carrier protein (208 aa).

Residues 1–25 form the signal peptide; it reads MKKLFSAKLFSALVLSFSLFSTAHA.

The protein belongs to the LolA family. As to quaternary structure, monomer.

The protein resides in the periplasm. Participates in the translocation of lipoproteins from the inner membrane to the outer membrane. Only forms a complex with a lipoprotein if the residue after the N-terminal Cys is not an aspartate (The Asp acts as a targeting signal to indicate that the lipoprotein should stay in the inner membrane). In Vibrio campbellii (strain ATCC BAA-1116), this protein is Outer-membrane lipoprotein carrier protein.